The following is a 198-amino-acid chain: Ribonuclease HII (198 aa).

Positions F3–P198 constitute an RNase H type-2 domain. Positions 9, 10, and 104 each coordinate a divalent metal cation.

The protein belongs to the RNase HII family. Requires Mn(2+) as cofactor. It depends on Mg(2+) as a cofactor.

It localises to the cytoplasm. It carries out the reaction Endonucleolytic cleavage to 5'-phosphomonoester.. In terms of biological role, endonuclease that specifically degrades the RNA of RNA-DNA hybrids. In Pyrobaculum neutrophilum (strain DSM 2338 / JCM 9278 / NBRC 100436 / V24Sta) (Thermoproteus neutrophilus), this protein is Ribonuclease HII.